Here is a 335-residue protein sequence, read N- to C-terminus: Phosphate acyltransferase (335 aa).

The protein belongs to the PlsX family. In terms of assembly, homodimer. Probably interacts with PlsY.

Its subcellular location is the cytoplasm. The catalysed reaction is a fatty acyl-[ACP] + phosphate = an acyl phosphate + holo-[ACP]. Its pathway is lipid metabolism; phospholipid metabolism. Catalyzes the reversible formation of acyl-phosphate (acyl-PO(4)) from acyl-[acyl-carrier-protein] (acyl-ACP). This enzyme utilizes acyl-ACP as fatty acyl donor, but not acyl-CoA. The protein is Phosphate acyltransferase of Streptococcus pyogenes serotype M6 (strain ATCC BAA-946 / MGAS10394).